Consider the following 208-residue polypeptide: 3-demethoxyubiquinol 3-hydroxylase (208 aa).

The Fe cation site is built by Glu57, Glu87, His90, Glu139, Glu171, and His174.

Belongs to the COQ7 family. Fe cation serves as cofactor.

The protein resides in the cell membrane. The catalysed reaction is a 5-methoxy-2-methyl-3-(all-trans-polyprenyl)benzene-1,4-diol + AH2 + O2 = a 3-demethylubiquinol + A + H2O. It participates in cofactor biosynthesis; ubiquinone biosynthesis. Its function is as follows. Catalyzes the hydroxylation of 2-nonaprenyl-3-methyl-6-methoxy-1,4-benzoquinol during ubiquinone biosynthesis. This is 3-demethoxyubiquinol 3-hydroxylase from Burkholderia pseudomallei (strain 668).